The chain runs to 227 residues: 4-nitrobenzoate reductase (227 aa).

15–19 (RRAVR) contacts FMN. Residues Ser45, Tyr102, and Ile107 each contribute to the NAD(+) site. Arg213 is an FMN binding site.

It belongs to the nitroreductase family. FMN is required as a cofactor.

It catalyses the reaction 4-nitrobenzoate + 2 NADH + 2 H(+) = 4-hydroxylaminobenzoate + 2 NAD(+) + H2O. Functionally, nitroreductase involved in the degradation of nitroaromatic compounds. Catalyzes the conversion of 4-nitrobenzoate to 4-hydroxylaminobenzoate. Required for the catabolism of 4-nitrotoluene. The chain is 4-nitrobenzoate reductase from Pseudomonas putida (Arthrobacter siderocapsulatus).